The sequence spans 775 residues: Subtilisin-like protease SBT1.5 (775 aa).

An N-terminal signal peptide occupies residues 1–19; it reads MAFFFYFFFLLTLSSPSSS. A propeptide spans 20 to 103 (activation peptide); that stretch reads ASSSNSLTYI…VIPEQVRHLH (84 aa). Residues 27–103 form the Inhibitor I9 domain; it reads TYIVHVDHEA…VIPEQVRHLH (77 aa). The 511-residue stretch at 107–617 folds into the Peptidase S8 domain; that stretch reads SPEFLGLRST…SGHVHPTKAM (511 aa). Asp137 (charge relay system) is an active-site residue. The N-linked (GlcNAc...) asparagine glycan is linked to Asn196. His210 acts as the Charge relay system in catalysis. In terms of domain architecture, PA spans 367-459; the sequence is MYPLVYGGSL…VGASGGDEIR (93 aa). The active-site Charge relay system is Ser549. Asn599, Asn638, and Asn762 each carry an N-linked (GlcNAc...) asparagine glycan.

This sequence belongs to the peptidase S8 family.

The protein localises to the secreted. The polypeptide is Subtilisin-like protease SBT1.5 (Arabidopsis thaliana (Mouse-ear cress)).